Here is a 132-residue protein sequence, read N- to C-terminus: Small ribosomal subunit protein uS8 (132 aa).

It belongs to the universal ribosomal protein uS8 family. As to quaternary structure, part of the 30S ribosomal subunit. Contacts proteins S5 and S12.

Its function is as follows. One of the primary rRNA binding proteins, it binds directly to 16S rRNA central domain where it helps coordinate assembly of the platform of the 30S subunit. In Bartonella quintana (strain Toulouse) (Rochalimaea quintana), this protein is Small ribosomal subunit protein uS8.